The following is a 271-amino-acid chain: Thiazole synthase (271 aa).

K104 (schiff-base intermediate with DXP) is an active-site residue. 1-deoxy-D-xylulose 5-phosphate-binding positions include G165, 192–193, and 214–215; these read AG and NT.

The protein belongs to the ThiG family. In terms of assembly, homotetramer. Forms heterodimers with either ThiH or ThiS.

The protein localises to the cytoplasm. The catalysed reaction is [ThiS sulfur-carrier protein]-C-terminal-Gly-aminoethanethioate + 2-iminoacetate + 1-deoxy-D-xylulose 5-phosphate = [ThiS sulfur-carrier protein]-C-terminal Gly-Gly + 2-[(2R,5Z)-2-carboxy-4-methylthiazol-5(2H)-ylidene]ethyl phosphate + 2 H2O + H(+). It functions in the pathway cofactor biosynthesis; thiamine diphosphate biosynthesis. Functionally, catalyzes the rearrangement of 1-deoxy-D-xylulose 5-phosphate (DXP) to produce the thiazole phosphate moiety of thiamine. Sulfur is provided by the thiocarboxylate moiety of the carrier protein ThiS. In vitro, sulfur can be provided by H(2)S. The polypeptide is Thiazole synthase (Burkholderia mallei (strain ATCC 23344)).